A 174-amino-acid chain; its full sequence is Shikimate kinase (174 aa).

14–19 (GAGKST) is an ATP binding site. Serine 18 contacts Mg(2+). Residues aspartate 36, arginine 60, and glycine 82 each contribute to the substrate site. Arginine 120 is a binding site for ATP. Arginine 141 contacts substrate. Arginine 158 serves as a coordination point for ATP.

Belongs to the shikimate kinase family. In terms of assembly, monomer. Requires Mg(2+) as cofactor.

The protein localises to the cytoplasm. The enzyme catalyses shikimate + ATP = 3-phosphoshikimate + ADP + H(+). Its pathway is metabolic intermediate biosynthesis; chorismate biosynthesis; chorismate from D-erythrose 4-phosphate and phosphoenolpyruvate: step 5/7. In terms of biological role, catalyzes the specific phosphorylation of the 3-hydroxyl group of shikimic acid using ATP as a cosubstrate. The polypeptide is Shikimate kinase (Buchnera aphidicola subsp. Baizongia pistaciae (strain Bp)).